A 358-amino-acid polypeptide reads, in one-letter code: MAVKWTGGHSSPILCLNASQEGLVASGAEGGDLVVWGEDGTLLGHTCFQGAEDVTNVLFSPSCPTKLYASHGETISILDVRSLKEPLDDFHVNEEEINCLSLNETENLLASADDSGTIKILDLENKKISRSLKRHSNICSSVAFRPQRPQSLVSCGLDMQVMLWNLRKARPLWITNLQEDETEEMESPQSPGQLLNPALAHSVSVASCGNVFSCGAEDGKVRIFRVMGVKCEQELGFKGHSLGVSQVCFLRESYLLLTGGNDGKIKLWDVSSEIEKKHKSPTKHTHRKKTKRAAYTKQGGGTHASVTGEDEHGKILPKLSIEHGEKVNWLLSTKIKGYRNILVADQTSCISVYPLKEF.

WD repeat units follow at residues 8–46, 92–131, 134–174, 195–234, and 239–278; these read GHSS…LGHT, VNEE…ISRS, RHSN…PLWI, LNPA…CEQE, and GHSL…EKKH. Positions 278–294 are enriched in basic residues; it reads HKSPTKHTHRKKTKRAA. The interval 278-309 is disordered; sequence HKSPTKHTHRKKTKRAAYTKQGGGTHASVTGE.

It belongs to the WD repeat WDR53 family.

This is WD repeat-containing protein 53 (WDR53) from Bos taurus (Bovine).